The sequence spans 149 residues: Calmodulin (149 aa).

An N-acetylalanine modification is found at A2. EF-hand domains are found at residues 8–43, 44–79, 81–116, and 117–149; these read EQIS…LGQN, PTEA…KMRD, DSEE…LGEK, and LTDN…MLSK. 20 residues coordinate Ca(2+): D21, D23, D25, T27, E32, D57, D59, N61, T63, E68, D94, D96, N98, Y100, E105, D130, D132, D134, Q136, and E141.

Belongs to the calmodulin family. In terms of processing, trimethylation of Lys-116 observed in other calmodulins is absent here.

In terms of biological role, calmodulin mediates the control of a large number of enzymes, ion channels and other proteins by Ca(2+). Among the enzymes to be stimulated by the calmodulin-Ca(2+) complex are a number of protein kinases and phosphatases. This is Calmodulin (CMD1) from Pleurotus cornucopiae (Cornucopia mushroom).